Consider the following 527-residue polypeptide: Hopanoid C-2 methylase (527 aa).

A B12-binding domain is found at 36–148 (VAAFMPPQGL…AKLTHDVTRP (113 aa)). Residues 173 to 408 (AECSKYLLGS…HDQVVAMWKD (236 aa)) form the Radical SAM core domain. Positions 189, 193, and 196 each coordinate [4Fe-4S] cluster.

This sequence belongs to the radical SAM superfamily. The cofactor is [4Fe-4S] cluster.

In terms of biological role, required for methylation of hopanoids at the C-2 position. The polypeptide is Hopanoid C-2 methylase (Rhodopseudomonas palustris (strain TIE-1)).